The chain runs to 244 residues: DNA repair protein RecO (244 aa).

It belongs to the RecO family.

Its function is as follows. Involved in DNA repair and RecF pathway recombination. In Jannaschia sp. (strain CCS1), this protein is DNA repair protein RecO.